A 367-amino-acid polypeptide reads, in one-letter code: Flagellin 2 (367 aa).

Belongs to the bacterial flagellin family.

Its subcellular location is the secreted. It localises to the bacterial flagellum. Functionally, flagellin is the subunit protein which polymerizes to form the filaments of bacterial flagella. The protein is Flagellin 2 (fliC2) of Proteus mirabilis.